Consider the following 161-residue polypeptide: V-type proton ATPase subunit c (161 aa).

Residues 1 to 9 (MSTDLCPVY) are Lumenal-facing. Residues 10-32 (APFFGVMGCTAAIVFASFGAAYG) traverse the membrane as a helical segment. At 33 to 54 (TAKAGVGISAMGVLRPDLIVKN) the chain is on the cytoplasmic side. A helical membrane pass occupies residues 55 to 75 (TIPVVMAGIIAIYGLVVSVLI). Residues 76–91 (SGNLKQILSLYSGFIQ) lie on the Lumenal side of the membrane. Residues 92-113 (LGAGLSVGLAGLAAGFAIGIVG) traverse the membrane as a helical segment. Over 114–125 (DAGVRGTAQQPR) the chain is Cytoplasmic. Residues 126–151 (LFVAMILILIFAEVLGLYGLIVALLL) form a helical membrane-spanning segment. Residues 152–161 (NTRATDNVTC) lie on the Lumenal side of the membrane.

This sequence belongs to the V-ATPase proteolipid subunit family. V-ATPase is a heteromultimeric enzyme composed of a peripheral catalytic V1 complex (components A to H) attached to an integral membrane V0 proton pore complex (components: a, c, c', c'', d, e, f and VOA1). The decameric c-ring forms the proton-conducting pore, and is composed of eight proteolipid subunits c, one subunit c' and one subunit c''.

It is found in the vacuole membrane. Its function is as follows. Proton-conducting pore forming subunit of the V0 complex of vacuolar(H+)-ATPase (V-ATPase), a multisubunit enzyme composed of a peripheral complex (V1) that hydrolyzes ATP and a membrane integral complex (V0) that translocates protons. V-ATPase is responsible for acidifying and maintaining the pH of intracellular compartments. This Schizosaccharomyces pombe (strain 972 / ATCC 24843) (Fission yeast) protein is V-type proton ATPase subunit c.